We begin with the raw amino-acid sequence, 374 residues long: Anhydro-N-acetylmuramic acid kinase (374 aa).

An ATP-binding site is contributed by Gly-12–Asp-19.

It belongs to the anhydro-N-acetylmuramic acid kinase family.

The enzyme catalyses 1,6-anhydro-N-acetyl-beta-muramate + ATP + H2O = N-acetyl-D-muramate 6-phosphate + ADP + H(+). It participates in amino-sugar metabolism; 1,6-anhydro-N-acetylmuramate degradation. It functions in the pathway cell wall biogenesis; peptidoglycan recycling. In terms of biological role, catalyzes the specific phosphorylation of 1,6-anhydro-N-acetylmuramic acid (anhMurNAc) with the simultaneous cleavage of the 1,6-anhydro ring, generating MurNAc-6-P. Is required for the utilization of anhMurNAc either imported from the medium or derived from its own cell wall murein, and thus plays a role in cell wall recycling. In Salmonella arizonae (strain ATCC BAA-731 / CDC346-86 / RSK2980), this protein is Anhydro-N-acetylmuramic acid kinase.